The primary structure comprises 496 residues: Probable malate:quinone oxidoreductase (496 aa).

This sequence belongs to the MQO family. FAD serves as cofactor.

The catalysed reaction is (S)-malate + a quinone = a quinol + oxaloacetate. It functions in the pathway carbohydrate metabolism; tricarboxylic acid cycle; oxaloacetate from (S)-malate (quinone route): step 1/1. The polypeptide is Probable malate:quinone oxidoreductase (Prochlorococcus marinus (strain MIT 9303)).